We begin with the raw amino-acid sequence, 51 residues long: Lantibiotic streptococcin A-FF22 (51 aa).

The propeptide occupies 1-25; it reads MEKNNEVINSIQEVSLEELDQIIGA. Cross-links (beta-methyllanthionine (Thr-Cys)) lie at residues 33–38 and 42–50; these read TISHEC and TWAFLATCC. A cross-link (lanthionine (Ser-Cys)) is located at residues 35–49; it reads SHECHLNTWAFLATC. 2,3-didehydrobutyrine is present on threonine 48.

Belongs to the type A lantibiotic family. In terms of processing, maturation of lantibiotics involves the enzymatic conversion of Thr, and Ser into dehydrated AA and the formation of thioether bonds with cysteine. This is followed by membrane translocation and cleavage of the modified precursor.

The protein localises to the secreted. Its subcellular location is the cell surface. In terms of biological role, lanthionine-containing peptide antibiotic (lantibiotic) active on certain Gram-positive bacteria. The bactericidal activity of lantibiotics is based on depolarization of energized bacterial cytoplasmic membranes, initiated by the formation of aqueous transmembrane pores. This is Lantibiotic streptococcin A-FF22 (scnA) from Streptococcus pyogenes.